A 214-amino-acid chain; its full sequence is Ceramide-1-phosphate transfer protein (214 aa).

D56, K60, R106, R110, and H150 together coordinate an N-acylsphingoid base 1-phosphate.

This sequence belongs to the GLTP family.

It localises to the cytoplasm. Its subcellular location is the cytosol. The protein resides in the golgi apparatus. It is found in the trans-Golgi network membrane. The protein localises to the cell membrane. It localises to the endosome membrane. Its subcellular location is the nucleus outer membrane. The catalysed reaction is N-(hexadecanoyl)-sphing-4-enine-1-phosphate(in) = N-(hexadecanoyl)-sphing-4-enine-1-phosphate(out). It catalyses the reaction N-(9Z-octadecenoyl)-sphing-4-enine-1-phosphate(in) = N-(9Z-octadecenoyl)-sphing-4-enine-1-phosphate(out). Mediates the intracellular transfer of ceramide-1-phosphate (C1P) between organelle membranes and the cell membrane. Required for normal structure of the Golgi stacks. Can bind phosphoceramides with a variety of aliphatic chains, but has a preference for lipids with saturated C16:0 or monounsaturated C18:1 aliphatic chains, and is inefficient with phosphoceramides containing lignoceryl (C24:0). Plays a role in the regulation of the cellular levels of ceramide-1-phosphate, and thereby contributes to the regulation of phospholipase PLA2G4A activity and the release of arachidonic acid. Has no activity with galactosylceramide, lactosylceramide, sphingomyelin, phosphatidylcholine, phosphatidic acid and ceramide. C1P transfer is stimulated by phosphatidylserine in C1P source vesicles. Regulates autophagy, inflammasome mediated IL1B and IL18 processing, and pyroptosis, but not apoptosis. This chain is Ceramide-1-phosphate transfer protein (CPTP), found in Bos taurus (Bovine).